The chain runs to 1478 residues: Phospholipase B1, membrane-associated (1478 aa).

Positions 1 to 27 (MELYPGVSPVGLLLLLLLGQGPSQIHG) are cleaved as a signal peptide. At 28–1422 (SSGENTLAWQ…KAEEPSNALY (1395 aa)) the chain is on the extracellular side. Tandem repeats lie at residues 43–351 (WTLK…YKNS), 366–711 (MKEG…TKNS), 712–1058 (NLGN…FRNS), and 1068–1407 (IENW…LRNS). A 4 X 308-326 AA approximate repeats region spans residues 43–1407 (WTLKNFPFPC…RPFLYTLRNS (1365 aa)). An N-linked (GlcNAc...) asparagine glycan is attached at Asn180. Catalysis depends on residues Ser404 and Asp518. 3 N-linked (GlcNAc...) asparagine glycosylation sites follow: Asn525, Asn626, and Asn637. The active site involves His659. 10 N-linked (GlcNAc...) asparagine glycosylation sites follow: Asn715, Asn764, Asn787, Asn801, Asn830, Asn926, Asn1227, Asn1280, Asn1289, and Asn1387. The segment at 1408-1450 (QLLPDKAEEPSNALYWAVPVAAIGGLAVGILGVMLWRTVKPVQ) is necessary for membrane localization. The helical transmembrane segment at 1423-1443 (WAVPVAAIGGLAVGILGVMLW) threads the bilayer. Residues 1444–1478 (RTVKPVQQEEEEEDTLPNTSVTQDAVSEKRLKAGN) are Cytoplasmic-facing. The tract at residues 1451 to 1478 (QEEEEEDTLPNTSVTQDAVSEKRLKAGN) is disordered. Residues 1459-1468 (LPNTSVTQDA) show a composition bias toward polar residues. A compositionally biased stretch (basic and acidic residues) spans 1469–1478 (VSEKRLKAGN).

This sequence belongs to the 'GDSL' lipolytic enzyme family. Phospholipase B1 subfamily. In terms of processing, undergoes proteolytic cleavage in the ileum.

It localises to the apical cell membrane. It carries out the reaction a 1,2-diacyl-sn-glycero-3-phosphocholine + H2O = a 1-acyl-sn-glycero-3-phosphocholine + a fatty acid + H(+). The enzyme catalyses a 1-O-alkyl-2-acyl-sn-glycero-3-phosphocholine + H2O = a 1-O-alkyl-sn-glycero-3-phosphocholine + a fatty acid + H(+). The catalysed reaction is a 1-acyl-sn-glycero-3-phosphocholine + H2O = sn-glycerol 3-phosphocholine + a fatty acid + H(+). It catalyses the reaction a triacylglycerol + H2O = a diacylglycerol + a fatty acid + H(+). It carries out the reaction 1,2-dihexadecanoyl-sn-glycero-3-phosphocholine + H2O = 1-hexadecanoyl-sn-glycero-3-phosphocholine + hexadecanoate + H(+). The enzyme catalyses 1-hexadecanoyl-2-(9Z-octadecenoyl)-sn-glycero-3-phosphocholine + H2O = 1-hexadecanoyl-sn-glycero-3-phosphocholine + (9Z)-octadecenoate + H(+). The catalysed reaction is 1,2-di-(9Z-octadecenoyl)-sn-glycero-3-phosphocholine + H2O = 1-(9Z-octadecenoyl)-sn-glycero-3-phosphocholine + (9Z)-octadecenoate + H(+). It catalyses the reaction 1-hexadecanoyl-2-(9Z,12Z-octadecadienoyl)-sn-glycero-3-phosphocholine + H2O = (9Z,12Z)-octadecadienoate + 1-hexadecanoyl-sn-glycero-3-phosphocholine + H(+). It carries out the reaction 1-hexadecanoyl-2-(9Z,12Z-octadecadienoyl)-sn-glycero-3-phosphocholine + H2O = 2-(9Z,12Z-octadecadienoyl)-sn-glycero-3-phosphocholine + hexadecanoate + H(+). The enzyme catalyses 1-hexadecanoyl-2-(9Z-octadecenoyl)-sn-glycero-3-phosphoethanolamine + H2O = 1-hexadecanoyl-sn-glycero-3-phosphoethanolamine + (9Z)-octadecenoate + H(+). The catalysed reaction is 1-hexadecanoyl-2-(9Z-octadecenoyl)-sn-glycero-3-phospho-(1'-sn-glycerol) + H2O = 1-hexadecanoyl-sn-glycero-3-phospho-(1'-sn-glycerol) + (9Z)-octadecenoate + H(+). It catalyses the reaction 1,2-dihexadecanoyl-sn-glycero-3-phosphocholine + 2 H2O = sn-glycerol 3-phosphocholine + 2 hexadecanoate + 2 H(+). It carries out the reaction 1-O-hexadecyl-2-(9Z)-octadecenoyl-sn-glycero-3-phosphocholine + H2O = 1-O-hexadecyl-sn-glycero-3-phosphocholine + (9Z)-octadecenoate + H(+). The enzyme catalyses 1-hexadecanoyl-sn-glycero-3-phosphocholine + H2O = sn-glycerol 3-phosphocholine + hexadecanoate + H(+). The catalysed reaction is 1,2,3-tri-(9Z-octadecenoyl)-glycerol + H2O = di-(9Z)-octadecenoylglycerol + (9Z)-octadecenoate + H(+). It catalyses the reaction 1-hexadecanoyl-2-(9Z)-octadecenoyl-3-octadecanoyl-sn-glycerol + H2O = 1-hexadecanoyl-2-(9Z-octadecenoyl)-sn-glycerol + octadecanoate + H(+). It carries out the reaction 1,3-dihexadecanoyl-2-(9Z-octadecenoyl)glycerol + H2O = 1,3-dihexadecanoylglycerol + (9Z)-octadecenoate + H(+). The enzyme catalyses 1,3-dihexadecanoyl-2-(9Z-octadecenoyl)glycerol + H2O = 1-hexadecanoyl-2-(9Z-octadecenoyl)-glycerol + hexadecanoate + H(+). The catalysed reaction is 1-hexadecanoyl-2-(9Z)-octadecenoyl-3-octadecanoyl-sn-glycerol + H2O = 1-hexadecanoyl-3-octadecanoyl-sn-glycerol + (9Z)-octadecenoate + H(+). It catalyses the reaction 1-hexadecanoyl-2-(9Z)-octadecenoyl-3-octadecanoyl-sn-glycerol + H2O = 2-(9Z-octadecenoyl)-3-octadecanoyl-sn-glycerol + hexadecanoate + H(+). It carries out the reaction 1-octadecanoyl-2-(9Z,12Z)-octadecadienoyl-sn-glycerol + H2O = 1-octadecanoyl-sn-glycerol + (9Z,12Z)-octadecadienoate + H(+). The enzyme catalyses 1,2-di-(9Z-octadecenoyl)-sn-glycerol + H2O = 1-(9Z-octadecenoyl)-sn-glycerol + (9Z)-octadecenoate + H(+). The catalysed reaction is 2,3-di-(9Z)-octadecenoyl-sn-glycerol + H2O = 3-(9Z-octadecenoyl)-sn-glycerol + (9Z)-octadecenoate + H(+). It catalyses the reaction 1,3-di-(9Z-octadecenoyl)-glycerol + H2O = 1-(9Z-octadecenoyl)-glycerol + (9Z)-octadecenoate + H(+). It carries out the reaction 1-(9Z-octadecenoyl)-glycerol + H2O = glycerol + (9Z)-octadecenoate + H(+). The enzyme catalyses 2-(9Z-octadecenoyl)-glycerol + H2O = glycerol + (9Z)-octadecenoate + H(+). Functionally, calcium-independent membrane-associated phospholipase that catalyzes complete diacylation of phospholipids by hydrolyzing both sn-1 and sn-2 fatty acyl chains attached to the glycerol backbone (phospholipase B activity). Has dual phospholipase and lysophospholipase activities toward diacylphospholipids. Preferentially cleaves sn-2 ester bonds over sn-1 bonds. Acts as a lipase toward glycerolipid substrates. Hydrolyzes fatty acyl chains of diacylglycerols with preference for the sn-2 position and of triacylglycerols with not positional selectivity. May also hydrolyze long chain retinyl esters such as retinyl palmitate. May contribute to digestion of dietary phospholipids, glycerolipids and retinoids, facilitating lipid absorption at the brush border. This Mus musculus (Mouse) protein is Phospholipase B1, membrane-associated (Plb1).